A 153-amino-acid chain; its full sequence is MENNLQVNIFCIQKSDEFKTWSEKYSKLISKYATLKEINVFNKKIALAQNLNAIEAKKSYEEAFMPYKKGYCIALDEKGKDLTSIEFAKLIQDKNELSFFIGGAYGLREEFNQSLDFRLSLSKLTLAHQFVKTLLLEQIYRAFCINNNHPYHK.

Residues L75, G102, and 121-126 (LSKLTL) contribute to the S-adenosyl-L-methionine site.

The protein belongs to the RNA methyltransferase RlmH family. In terms of assembly, homodimer.

It is found in the cytoplasm. It catalyses the reaction pseudouridine(1915) in 23S rRNA + S-adenosyl-L-methionine = N(3)-methylpseudouridine(1915) in 23S rRNA + S-adenosyl-L-homocysteine + H(+). Its function is as follows. Specifically methylates the pseudouridine at position 1915 (m3Psi1915) in 23S rRNA. The polypeptide is Ribosomal RNA large subunit methyltransferase H (Campylobacter jejuni (strain RM1221)).